The sequence spans 212 residues: MNQSLLAPYGNPIERVNAALSALRQGKGVLVVDDEDRENEGDLIYSAETLTNQQMALLIRECSGIVCLCLTDERIKQLQLPPMVSDNNSQYGTAFTVSIEAKQGVTTGVSAADRVTTIKAAIADDAKPDDLARPGHVYPLRARPGGVLERRGHTEGTVDLMKLAGLQPFGVLCEVTLPDGTMARLPEIVEFAQQHDMPVLTIEDIVAYRNTQ.

Residues 37 to 38 (RE), aspartate 42, 150 to 154 (RRGHT), and glutamate 174 contribute to the D-ribulose 5-phosphate site. Glutamate 38 provides a ligand contact to Mg(2+). Histidine 153 serves as a coordination point for Mg(2+).

This sequence belongs to the DHBP synthase family. Homodimer. Mg(2+) serves as cofactor. The cofactor is Mn(2+).

It carries out the reaction D-ribulose 5-phosphate = (2S)-2-hydroxy-3-oxobutyl phosphate + formate + H(+). It participates in cofactor biosynthesis; riboflavin biosynthesis; 2-hydroxy-3-oxobutyl phosphate from D-ribulose 5-phosphate: step 1/1. Functionally, catalyzes the conversion of D-ribulose 5-phosphate to formate and 3,4-dihydroxy-2-butanone 4-phosphate. The polypeptide is 3,4-dihydroxy-2-butanone 4-phosphate synthase (Shewanella pealeana (strain ATCC 700345 / ANG-SQ1)).